We begin with the raw amino-acid sequence, 486 residues long: 2-succinylbenzoate--CoA ligase (486 aa).

It belongs to the ATP-dependent AMP-binding enzyme family. MenE subfamily.

The enzyme catalyses 2-succinylbenzoate + ATP + CoA = 2-succinylbenzoyl-CoA + AMP + diphosphate. It functions in the pathway quinol/quinone metabolism; 1,4-dihydroxy-2-naphthoate biosynthesis; 1,4-dihydroxy-2-naphthoate from chorismate: step 5/7. It participates in quinol/quinone metabolism; menaquinone biosynthesis. Its function is as follows. Converts 2-succinylbenzoate (OSB) to 2-succinylbenzoyl-CoA (OSB-CoA). The sequence is that of 2-succinylbenzoate--CoA ligase from Bacillus subtilis (strain 168).